Consider the following 363-residue polypeptide: Histidinol-phosphate aminotransferase (363 aa).

Lysine 218 carries the post-translational modification N6-(pyridoxal phosphate)lysine.

It belongs to the class-II pyridoxal-phosphate-dependent aminotransferase family. Histidinol-phosphate aminotransferase subfamily. Homodimer. Pyridoxal 5'-phosphate serves as cofactor.

It catalyses the reaction L-histidinol phosphate + 2-oxoglutarate = 3-(imidazol-4-yl)-2-oxopropyl phosphate + L-glutamate. The protein operates within amino-acid biosynthesis; L-histidine biosynthesis; L-histidine from 5-phospho-alpha-D-ribose 1-diphosphate: step 7/9. The chain is Histidinol-phosphate aminotransferase from Xanthomonas oryzae pv. oryzae (strain MAFF 311018).